The primary structure comprises 496 residues: Probable histidine ammonia-lyase (496 aa).

The segment at residues 141–143 (ASG) is a cross-link (5-imidazolinone (Ala-Gly)). At Ser-142 the chain carries 2,3-didehydroalanine (Ser).

It belongs to the PAL/histidase family. Post-translationally, contains an active site 4-methylidene-imidazol-5-one (MIO), which is formed autocatalytically by cyclization and dehydration of residues Ala-Ser-Gly.

It is found in the cytoplasm. The catalysed reaction is L-histidine = trans-urocanate + NH4(+). The protein operates within amino-acid degradation; L-histidine degradation into L-glutamate; N-formimidoyl-L-glutamate from L-histidine: step 1/3. This Thermoplasma acidophilum (strain ATCC 25905 / DSM 1728 / JCM 9062 / NBRC 15155 / AMRC-C165) protein is Probable histidine ammonia-lyase.